A 136-amino-acid polypeptide reads, in one-letter code: ATP synthase epsilon chain, plastid (136 aa).

The protein belongs to the ATPase epsilon chain family. As to quaternary structure, F-type ATPases have 2 components, CF(1) - the catalytic core - and CF(0) - the membrane proton channel. CF(1) has five subunits: alpha(3), beta(3), gamma(1), delta(1), epsilon(1). CF(0) has three main subunits: a, b and c.

The protein resides in the plastid thylakoid membrane. In terms of biological role, produces ATP from ADP in the presence of a proton gradient across the membrane. The protein is ATP synthase epsilon chain, plastid of Cuscuta reflexa (Southern Asian dodder).